The sequence spans 563 residues: Coiled-coil domain-containing protein 38 (563 aa).

Coiled coils occupy residues 129-212 (KRNT…KTEF), 384-415 (NIEF…RSRL), and 485-522 (ERMK…AVAQ). The segment at 521 to 550 (AQPKKKLGRRLVYHSKPPSANKQQLPLVNE) is disordered. Basic residues predominate over residues 523-533 (PKKKLGRRLVY).

Interacts with CCDC42, CFAP53, IFT88 and ODF2. Interacts with CCDC146. Interacts with TEKT3. Interacts with ubiquitinated histone H2A.

It localises to the cytoplasm. The protein resides in the cytoskeleton. Its subcellular location is the microtubule organizing center. The protein localises to the centrosome. It is found in the perinuclear region. It localises to the cell projection. The protein resides in the cilium. Its subcellular location is the flagellum. In terms of biological role, essential for male fertility. Required for sperm flagellum biogenesis. Also required for acrosome biogenesis. Required for the attachment of developing acrosomes to the nucleus during spermiogenesis and may be involved in the transport of fibrous sheath components. The polypeptide is Coiled-coil domain-containing protein 38 (CCDC38) (Macaca fascicularis (Crab-eating macaque)).